Here is a 265-residue protein sequence, read N- to C-terminus: Hydroxyethylthiazole kinase 2 (265 aa).

Methionine 39 is a binding site for substrate. 2 residues coordinate ATP: lysine 115 and threonine 168. Residue glycine 195 coordinates substrate.

This sequence belongs to the Thz kinase family. Mg(2+) is required as a cofactor.

The catalysed reaction is 5-(2-hydroxyethyl)-4-methylthiazole + ATP = 4-methyl-5-(2-phosphooxyethyl)-thiazole + ADP + H(+). It participates in cofactor biosynthesis; thiamine diphosphate biosynthesis; 4-methyl-5-(2-phosphoethyl)-thiazole from 5-(2-hydroxyethyl)-4-methylthiazole: step 1/1. In terms of biological role, catalyzes the phosphorylation of the hydroxyl group of 4-methyl-5-beta-hydroxyethylthiazole (THZ). The chain is Hydroxyethylthiazole kinase 2 from Clostridium botulinum (strain 657 / Type Ba4).